Here is a 37-residue protein sequence, read N- to C-terminus: MVETLLSGIVLGLVPITLAGLFVTAYLQYRRGDRLDI.

A helical membrane pass occupies residues 5 to 25; the sequence is LLSGIVLGLVPITLAGLFVTA.

The protein belongs to the PetG family. As to quaternary structure, the 4 large subunits of the cytochrome b6-f complex are cytochrome b6, subunit IV (17 kDa polypeptide, PetD), cytochrome f and the Rieske protein, while the 4 small subunits are PetG, PetL, PetM and PetN. The complex functions as a dimer.

It localises to the plastid. It is found in the chloroplast thylakoid membrane. In terms of biological role, component of the cytochrome b6-f complex, which mediates electron transfer between photosystem II (PSII) and photosystem I (PSI), cyclic electron flow around PSI, and state transitions. PetG is required for either the stability or assembly of the cytochrome b6-f complex. The chain is Cytochrome b6-f complex subunit 5 from Gnetum parvifolium (Small-leaved jointfir).